The primary structure comprises 376 residues: Protein-glutamate methylesterase/protein-glutamine glutaminase 1 (376 aa).

The region spanning 4-121 is the Response regulatory domain; that stretch reads KVLVVDDSSF…ARNRDEAVSL (118 aa). A 4-aspartylphosphate modification is found at D55. The segment at 138–174 is disordered; that stretch reads RPVASSTPVQERPQSTLNRPTTGLRREAPAQAPVSRA. Residues 141–158 show a composition bias toward polar residues; the sequence is ASSTPVQERPQSTLNRPT. The CheB-type methylesterase domain maps to 183-376; the sequence is SGKKYQLTAI…ERMLVEVGLA (194 aa). Catalysis depends on residues S195, H222, and D318.

Belongs to the CheB family. Phosphorylated by CheA. Phosphorylation of the N-terminal regulatory domain activates the methylesterase activity.

It is found in the cytoplasm. The catalysed reaction is [protein]-L-glutamate 5-O-methyl ester + H2O = L-glutamyl-[protein] + methanol + H(+). It catalyses the reaction L-glutaminyl-[protein] + H2O = L-glutamyl-[protein] + NH4(+). Functionally, involved in chemotaxis. Part of a chemotaxis signal transduction system that modulates chemotaxis in response to various stimuli. Catalyzes the demethylation of specific methylglutamate residues introduced into the chemoreceptors (methyl-accepting chemotaxis proteins or MCP) by CheR. Also mediates the irreversible deamidation of specific glutamine residues to glutamic acid. In Vibrio vulnificus (strain CMCP6), this protein is Protein-glutamate methylesterase/protein-glutamine glutaminase 1.